Here is a 682-residue protein sequence, read N- to C-terminus: DNA ligase (682 aa).

Residues 38-42 (DAEYD), 87-88 (SI), and glutamate 119 each bind NAD(+). The active-site N6-AMP-lysine intermediate is lysine 121. Residues arginine 142, glutamate 181, lysine 298, and lysine 322 each coordinate NAD(+). Zn(2+)-binding residues include cysteine 416, cysteine 419, cysteine 434, and cysteine 439. The BRCT domain occupies 601–682 (GHEMPLAGKT…LLSLLEPGER (82 aa)).

The protein belongs to the NAD-dependent DNA ligase family. LigA subfamily. Mg(2+) is required as a cofactor. It depends on Mn(2+) as a cofactor.

It catalyses the reaction NAD(+) + (deoxyribonucleotide)n-3'-hydroxyl + 5'-phospho-(deoxyribonucleotide)m = (deoxyribonucleotide)n+m + AMP + beta-nicotinamide D-nucleotide.. DNA ligase that catalyzes the formation of phosphodiester linkages between 5'-phosphoryl and 3'-hydroxyl groups in double-stranded DNA using NAD as a coenzyme and as the energy source for the reaction. It is essential for DNA replication and repair of damaged DNA. In Desulfosudis oleivorans (strain DSM 6200 / JCM 39069 / Hxd3) (Desulfococcus oleovorans), this protein is DNA ligase.